The following is a 178-amino-acid chain: Caveolin-1 (178 aa).

S2 is modified (N-acetylserine). Phosphoserine is present on S2. Positions 2–94 (SGGKYVDSEG…WKASFTTFTV (93 aa)) are required for homooligomerization. Topologically, residues 2–104 (SGGKYVDSEG…TKYWFYRLLS (103 aa)) are cytoplasmic. K5 is modified (N6-acetyllysine; alternate). K5 is covalently cross-linked (Glycyl lysine isopeptide (Lys-Gly) (interchain with G-Cter in ubiquitin); alternate). At Y6 the chain carries Phosphotyrosine. Residue S9 is modified to Phosphoserine. Y14 is subject to Phosphotyrosine; by ABL1. Phosphotyrosine is present on Y25. Glycyl lysine isopeptide (Lys-Gly) (interchain with G-Cter in ubiquitin) cross-links involve residues K26, K30, K39, K47, and K57. Positions 82 to 94 (DGIWKASFTTFTV) are interaction with CAVIN3. An intramembrane region (helical) is located at residues 105–125 (ALFGIPMALIWGIYFAILSFL). Over 126–178 (HIWAVVPCIKSFLIEIQCISRVYSIYVHTFCDPLFEAIGKIFSNVRINLQKEI) the chain is Cytoplasmic. An interacts with SPRY1, SPRY2, SPRY3 and SPRY4 region spans residues 131-142 (VPCIKSFLIEIQ). Residues C133, C143, and C156 are each lipidated (S-palmitoyl cysteine). The interval 149–160 (SIYVHTFCDPLF) is interacts with SPRY1, SPRY2, and SPRY4. Residues 167–178 (FSNVRINLQKEI) form an interacts with SPRY1, SPRY2, SPRY3 and SPRY4 region.

The protein belongs to the caveolin family. In terms of assembly, homooligomer. Interacts with GLIPR2. Interacts with NOSTRIN. Interacts with SNAP25 and STX1A. Interacts (via the N-terminus) with DPP4; the interaction is direct. Interacts with CTNNB1, CDH1 and JUP. Interacts with PACSIN2; this interaction induces membrane tubulation. Interacts with SLC7A9. Interacts with BMX and BTK. Interacts with TGFBR1. Interacts with CAVIN3 (via leucine-zipper domain) in a cholesterol-sensitive manner. Interacts with CAVIN1. Interacts with EHD2 in a cholesterol-dependent manner. Forms a ternary complex with UBXN6 and VCP; mediates CAV1 targeting to lysosomes for degradation. Interacts with ABCG1; this interaction regulates ABCG1-mediated cholesterol efflux. Interacts with NEU3; this interaction enhances NEU3 sialidase activity within caveola. Interacts (via C-terminus) with SPRY1, SPRY2 (via C-terminus), SPRY3, and SPRY4. Interacts with IGFBP5; this interaction allows trafficking of IGFBP5 from the plasma membrane to the nucleus. Post-translationally, phosphorylated at Tyr-14 by ABL1 in response to oxidative stress. In terms of processing, ubiquitinated. Undergo monoubiquitination and multi- and/or polyubiquitination. Monoubiquitination of N-terminal lysines promotes integration in a ternary complex with UBXN6 and VCP which promotes oligomeric CAV1 targeting to lysosomes for degradation. Ubiquitinated by ZNRF1; leading to degradation and modulation of the TLR4-mediated immune response.

The protein resides in the golgi apparatus membrane. Its subcellular location is the cell membrane. It is found in the membrane. It localises to the caveola. The protein localises to the membrane raft. Functionally, may act as a scaffolding protein within caveolar membranes. Forms a stable heterooligomeric complex with CAV2 that targets to lipid rafts and drives caveolae formation. Mediates the recruitment of CAVIN proteins (CAVIN1/2/3/4) to the caveolae. Interacts directly with G-protein alpha subunits and can functionally regulate their activity. Involved in the costimulatory signal essential for T-cell receptor (TCR)-mediated T-cell activation. Its binding to DPP4 induces T-cell proliferation and NF-kappa-B activation in a T-cell receptor/CD3-dependent manner. Recruits CTNNB1 to caveolar membranes and may regulate CTNNB1-mediated signaling through the Wnt pathway. Negatively regulates TGFB1-mediated activation of SMAD2/3 by mediating the internalization of TGFBR1 from membrane rafts leading to its subsequent degradation. Binds 20(S)-hydroxycholesterol (20(S)-OHC). In Equus caballus (Horse), this protein is Caveolin-1 (CAV1).